The sequence spans 338 residues: Ketol-acid reductoisomerase (NADP(+)) (338 aa).

The KARI N-terminal Rossmann domain maps to methionine 1 to threonine 181. NADP(+) is bound by residues tyrosine 24–glutamine 27, arginine 47, serine 50, serine 52, and aspartate 82–glutamine 85. The active site involves histidine 107. NADP(+) is bound at residue glycine 133. A KARI C-terminal knotted domain is found at threonine 182–isoleucine 327. Positions 190, 194, 226, and 230 each coordinate Mg(2+). Substrate is bound at residue serine 251.

It belongs to the ketol-acid reductoisomerase family. Mg(2+) serves as cofactor.

The enzyme catalyses (2R)-2,3-dihydroxy-3-methylbutanoate + NADP(+) = (2S)-2-acetolactate + NADPH + H(+). The catalysed reaction is (2R,3R)-2,3-dihydroxy-3-methylpentanoate + NADP(+) = (S)-2-ethyl-2-hydroxy-3-oxobutanoate + NADPH + H(+). Its pathway is amino-acid biosynthesis; L-isoleucine biosynthesis; L-isoleucine from 2-oxobutanoate: step 2/4. It functions in the pathway amino-acid biosynthesis; L-valine biosynthesis; L-valine from pyruvate: step 2/4. Functionally, involved in the biosynthesis of branched-chain amino acids (BCAA). Catalyzes an alkyl-migration followed by a ketol-acid reduction of (S)-2-acetolactate (S2AL) to yield (R)-2,3-dihydroxy-isovalerate. In the isomerase reaction, S2AL is rearranged via a Mg-dependent methyl migration to produce 3-hydroxy-3-methyl-2-ketobutyrate (HMKB). In the reductase reaction, this 2-ketoacid undergoes a metal-dependent reduction by NADPH to yield (R)-2,3-dihydroxy-isovalerate. This is Ketol-acid reductoisomerase (NADP(+)) from Hahella chejuensis (strain KCTC 2396).